The sequence spans 448 residues: MTTPTAIRRLDAADPDFARHLDHLLSWESVSDDSVNQRVLDIIKAVRERGDAALVELTQKFDGLQVASMAELILPRERLELALTRITPVQRQALEKAAERVRSYHEKQKQDSWSYTEADGTVLGQKVTPLDRAGLYVPGGKASYPSSVLMNAIPAKVAGVTEVVMVVPTPRGEINELVLAAACIAGVDRVFTIGGAQAVAALAYGTESVPKVDKVVGPGNIYVATAKRHVFGQVGIDMIAGPSEILVVCDGQTDPDWIAMDLFSQAEHDEDAQAILVSPDAEFLDKVAASITRLLPTMARAAIVETSINGRGALIKVADMAQAIEVANRIAPEHLELSVADPEAWLPHIRHAGAIFMGRHTSEALGDYCAGPNHVLPTSGTARFSSPLGVYDFQKRSSIIYCSPEGASELGKTASVLARGESLSGHARSAEYRITDLDWKTGNLEEGK.

Positions 136, 197, and 220 each coordinate NAD(+). Substrate contacts are provided by Ser-243, Gln-265, and His-268. Residues Gln-265 and His-268 each coordinate Zn(2+). Catalysis depends on proton acceptor residues Glu-333 and His-334. Positions 334, 367, 421, and 426 each coordinate substrate. Residue Asp-367 participates in Zn(2+) binding. Residue His-426 participates in Zn(2+) binding.

This sequence belongs to the histidinol dehydrogenase family. Zn(2+) is required as a cofactor.

It carries out the reaction L-histidinol + 2 NAD(+) + H2O = L-histidine + 2 NADH + 3 H(+). The protein operates within amino-acid biosynthesis; L-histidine biosynthesis; L-histidine from 5-phospho-alpha-D-ribose 1-diphosphate: step 9/9. In terms of biological role, catalyzes the sequential NAD-dependent oxidations of L-histidinol to L-histidinaldehyde and then to L-histidine. In Pseudomonas syringae pv. tomato (strain ATCC BAA-871 / DC3000), this protein is Histidinol dehydrogenase.